A 197-amino-acid polypeptide reads, in one-letter code: Nucleoid occlusion factor SlmA (197 aa).

The HTH tetR-type domain maps to 7–67; it reads INRREHILQC…GLIDFIEESL (61 aa). The segment at residues 30 to 49 is a DNA-binding region (H-T-H motif); sequence TTAKLAAEVGVSEAALYRHF.

The protein belongs to the nucleoid occlusion factor SlmA family. As to quaternary structure, homodimer. Interacts with FtsZ.

The protein localises to the cytoplasm. Its subcellular location is the nucleoid. Functionally, required for nucleoid occlusion (NO) phenomenon, which prevents Z-ring formation and cell division over the nucleoid. Acts as a DNA-associated cell division inhibitor that binds simultaneously chromosomal DNA and FtsZ, and disrupts the assembly of FtsZ polymers. SlmA-DNA-binding sequences (SBS) are dispersed on non-Ter regions of the chromosome, preventing FtsZ polymerization at these regions. In Shewanella loihica (strain ATCC BAA-1088 / PV-4), this protein is Nucleoid occlusion factor SlmA.